The following is a 285-amino-acid chain: Probable endonuclease 4 (285 aa).

Residues H68, H108, E145, D179, H182, H216, D229, H231, and E261 each coordinate Zn(2+).

Belongs to the AP endonuclease 2 family. It depends on Zn(2+) as a cofactor.

It catalyses the reaction Endonucleolytic cleavage to 5'-phosphooligonucleotide end-products.. Endonuclease IV plays a role in DNA repair. It cleaves phosphodiester bonds at apurinic or apyrimidinic (AP) sites, generating a 3'-hydroxyl group and a 5'-terminal sugar phosphate. The chain is Probable endonuclease 4 from Geotalea daltonii (strain DSM 22248 / JCM 15807 / FRC-32) (Geobacter daltonii).